We begin with the raw amino-acid sequence, 941 residues long: Glycine dehydrogenase (decarboxylating) (941 aa).

An N6-(pyridoxal phosphate)lysine modification is found at K692.

It belongs to the GcvP family. As to quaternary structure, the glycine cleavage system is composed of four proteins: P, T, L and H. Pyridoxal 5'-phosphate serves as cofactor.

The enzyme catalyses N(6)-[(R)-lipoyl]-L-lysyl-[glycine-cleavage complex H protein] + glycine + H(+) = N(6)-[(R)-S(8)-aminomethyldihydrolipoyl]-L-lysyl-[glycine-cleavage complex H protein] + CO2. In terms of biological role, the glycine cleavage system catalyzes the degradation of glycine. The P protein binds the alpha-amino group of glycine through its pyridoxal phosphate cofactor; CO(2) is released and the remaining methylamine moiety is then transferred to the lipoamide cofactor of the H protein. The polypeptide is Glycine dehydrogenase (decarboxylating) (Mycobacterium avium (strain 104)).